We begin with the raw amino-acid sequence, 467 residues long: Fumarate hydratase class II (467 aa).

Substrate contacts are provided by residues 98 to 100 (SGT), R126, 129 to 132 (HPND), 139 to 141 (SSN), and T187. H188 acts as the Proton donor/acceptor in catalysis. Residue S318 is part of the active site. Substrate contacts are provided by residues S319 and 324 to 326 (KVN).

The protein belongs to the class-II fumarase/aspartase family. Fumarase subfamily. Homotetramer.

It is found in the cytoplasm. The enzyme catalyses (S)-malate = fumarate + H2O. It participates in carbohydrate metabolism; tricarboxylic acid cycle; (S)-malate from fumarate: step 1/1. Its function is as follows. Involved in the TCA cycle. Catalyzes the stereospecific interconversion of fumarate to L-malate. The polypeptide is Fumarate hydratase class II (Salmonella typhimurium (strain LT2 / SGSC1412 / ATCC 700720)).